We begin with the raw amino-acid sequence, 372 residues long: MALVKRNNNMALIATEAGKLAAVKAGQVMLSPAGRELIWNGVNWVRRKLGRSKKSDVILHPGVLPGAIAAPVANTRIIRASKPKFTRSKGSVTIAHRELLGQFNNSSGLVVNGGVSGNLYRINPSNPVVFPWLQGIAASFDQYKFDRVQLQYVPMCATTETGRVAIYFDKDQQDVEPADRVELANMGHWTESAPWCESTLNVPVDNVKRFMNDNTTTDRKLVDLGQIGLATYGGGSTNPVGDLFIHYTITLFEPQPLASLVETEQSGAGAAPFGTNLVTVSSNATTTIITFRGPGVYLLALSQRAASFTTLVTAGGAVVNSHTTLFSGPAYQSIANITATIPGGSITYNGTLFGNYTLQVTRAKISNNATLI.

This sequence belongs to the icosahedral plant coat protein family. As to quaternary structure, homomultimer.

The protein localises to the virion. Functionally, capsid protein self-assembles to form an icosahedral capsid with a T=3 symmetry, about 32-35 nm in diameter, and consisting of 180 capsid proteins. This Cajanus cajan (Pigeon pea) protein is Capsid protein.